The following is a 302-amino-acid chain: Sulfate adenylyltransferase subunit 2 (302 aa).

It belongs to the PAPS reductase family. CysD subfamily. In terms of assembly, heterodimer composed of CysD, the smaller subunit, and CysN.

The enzyme catalyses sulfate + ATP + H(+) = adenosine 5'-phosphosulfate + diphosphate. Its pathway is sulfur metabolism; hydrogen sulfide biosynthesis; sulfite from sulfate: step 1/3. In terms of biological role, with CysN forms the ATP sulfurylase (ATPS) that catalyzes the adenylation of sulfate producing adenosine 5'-phosphosulfate (APS) and diphosphate, the first enzymatic step in sulfur assimilation pathway. APS synthesis involves the formation of a high-energy phosphoric-sulfuric acid anhydride bond driven by GTP hydrolysis by CysN coupled to ATP hydrolysis by CysD. This chain is Sulfate adenylyltransferase subunit 2, found in Escherichia coli O81 (strain ED1a).